The primary structure comprises 480 residues: ATP synthase subunit beta 1 (480 aa).

G154–T161 is a binding site for ATP.

This sequence belongs to the ATPase alpha/beta chains family. In terms of assembly, F-type ATPases have 2 components, CF(1) - the catalytic core - and CF(0) - the membrane proton channel. CF(1) has five subunits: alpha(3), beta(3), gamma(1), delta(1), epsilon(1). CF(0) has four main subunits: a(1), b(1), b'(1) and c(9-12).

The protein localises to the cell inner membrane. The enzyme catalyses ATP + H2O + 4 H(+)(in) = ADP + phosphate + 5 H(+)(out). Its function is as follows. Produces ATP from ADP in the presence of a proton gradient across the membrane. The catalytic sites are hosted primarily by the beta subunits. The polypeptide is ATP synthase subunit beta 1 (Bradyrhizobium sp. (strain BTAi1 / ATCC BAA-1182)).